Here is a 360-residue protein sequence, read N- to C-terminus: Membrane-bound lytic murein transglycosylase C (360 aa).

Residues 1-16 (MKKLLALAVIAPLLIS) form the signal peptide. Cys17 is lipidated: N-palmitoyl cysteine. Cys17 carries S-diacylglycerol cysteine lipidation.

The protein belongs to the transglycosylase Slt family.

The protein resides in the cell outer membrane. It catalyses the reaction Exolytic cleavage of the (1-&gt;4)-beta-glycosidic linkage between N-acetylmuramic acid (MurNAc) and N-acetylglucosamine (GlcNAc) residues in peptidoglycan, from either the reducing or the non-reducing ends of the peptidoglycan chains, with concomitant formation of a 1,6-anhydrobond in the MurNAc residue.. Murein-degrading enzyme. May play a role in recycling of muropeptides during cell elongation and/or cell division. This chain is Membrane-bound lytic murein transglycosylase C, found in Salmonella typhi.